A 388-amino-acid chain; its full sequence is 4-hydroxy-3-methylbut-2-en-1-yl diphosphate synthase (flavodoxin) (388 aa).

A disordered region spans residues 1–22; it reads MTSVNLGMPAAPQPVLSPRRKT. [4Fe-4S] cluster is bound by residues Cys281, Cys284, Cys316, and Glu323.

This sequence belongs to the IspG family. It depends on [4Fe-4S] cluster as a cofactor.

It catalyses the reaction (2E)-4-hydroxy-3-methylbut-2-enyl diphosphate + oxidized [flavodoxin] + H2O + 2 H(+) = 2-C-methyl-D-erythritol 2,4-cyclic diphosphate + reduced [flavodoxin]. It participates in isoprenoid biosynthesis; isopentenyl diphosphate biosynthesis via DXP pathway; isopentenyl diphosphate from 1-deoxy-D-xylulose 5-phosphate: step 5/6. Its function is as follows. Converts 2C-methyl-D-erythritol 2,4-cyclodiphosphate (ME-2,4cPP) into 1-hydroxy-2-methyl-2-(E)-butenyl 4-diphosphate. This Kocuria rhizophila (strain ATCC 9341 / DSM 348 / NBRC 103217 / DC2201) protein is 4-hydroxy-3-methylbut-2-en-1-yl diphosphate synthase (flavodoxin).